The primary structure comprises 196 residues: Zinc metalloproteinase-disintegrin-like bothrojarin-3 (196 aa).

In terms of domain architecture, Disintegrin spans Pro2–Asn88. Ca(2+)-binding residues include Val4, Leu9, Glu11, Glu14, and Asp17. Intrachain disulfides connect Cys5–Cys34, Cys16–Cys29, Cys18–Cys24, Cys28–Cys51, Cys42–Cys48, Cys47–Cys73, Cys60–Cys80, Cys67–Cys99, Cys92–Cys104, Cys111–Cys161, Cys126–Cys168, Cys139–Cys149, and Cys156–Cys193. A D/ECD-tripeptide motif is present at residues Glu66–Asp68.

Belongs to the venom metalloproteinase (M12B) family. P-III subfamily. P-IIIa sub-subfamily. Monomer. Zn(2+) serves as cofactor. In terms of processing, glycosylated. In terms of tissue distribution, expressed by the venom gland.

It localises to the secreted. Functionally, the hemorrhagic metalloproteinase-disintegrin-like bothrojarin-1 is a potent inhibitor of collagen-induced platelet aggregation by blockage of alpha-2/beta-1 (ITGA2/ITGB1) integrin. It does not present any fibrinogen-clotting activity. The polypeptide is Zinc metalloproteinase-disintegrin-like bothrojarin-3 (Bothrops jararaca (Jararaca)).